Reading from the N-terminus, the 594-residue chain is Actin-histidine N-methyltransferase (594 aa).

Positions 1–23 (MGKKSRVKTQKSGTGATASVSPK) are disordered. Positions 10-23 (QKSGTGATASVSPK) are enriched in polar residues. S-adenosyl-L-methionine-binding positions include arginine 75, 104–106 (EGF), arginine 254, 275–279 (DMCNH), and 325–327 (SGF). One can recognise an SET domain in the interval 94 to 314 (EGFEMVSFKE…AGEQIYIFYG (221 aa)). The segment at 553–594 (INGENSIPNGTRLEKEDLNQEQSKRVTEDAKEPSDSTEEVKE) is disordered. The span at 564–594 (RLEKEDLNQEQSKRVTEDAKEPSDSTEEVKE) shows a compositional bias: basic and acidic residues.

Belongs to the class V-like SAM-binding methyltransferase superfamily. SETD3 actin-histidine methyltransferase family. As to quaternary structure, interacts with MYOD1. Phosphorylated by GSK3B, which is required for recognition by the SCF(FBXW7) complex and subsequent degradation. Post-translationally, ubiquitinated by the SCF(FBXW7) complex following phosphorylation by GSK3B, leading to its degradation by the proteasome.

The protein resides in the cytoplasm. Its subcellular location is the nucleus. The enzyme catalyses L-histidyl-[protein] + S-adenosyl-L-methionine = N(tele)-methyl-L-histidyl-[protein] + S-adenosyl-L-homocysteine + H(+). In terms of biological role, protein-histidine N-methyltransferase that specifically mediates 3-methylhistidine (tele-methylhistidine) methylation of actin at 'His-73'. Histidine methylation of actin is required for smooth muscle contraction of the laboring uterus during delivery. Does not have protein-lysine N-methyltransferase activity and probably only catalyzes histidine methylation of actin. The chain is Actin-histidine N-methyltransferase from Rhinolophus ferrumequinum (Greater horseshoe bat).